Reading from the N-terminus, the 231-residue chain is DNA repair protein RecO (231 aa).

This sequence belongs to the RecO family.

Functionally, involved in DNA repair and RecF pathway recombination. The sequence is that of DNA repair protein RecO from Coxiella burnetii (strain CbuK_Q154) (Coxiella burnetii (strain Q154)).